Here is a 198-residue protein sequence, read N- to C-terminus: Segregation and condensation protein B (198 aa).

The interval 167–198 (PKLADPEADDPDQNEMDLFFDRFNQSKEQEEE) is disordered. Residues 172–181 (PEADDPDQNE) are compositionally biased toward acidic residues.

This sequence belongs to the ScpB family. In terms of assembly, homodimer. Homodimerization may be required to stabilize the binding of ScpA to the Smc head domains. Component of a cohesin-like complex composed of ScpA, ScpB and the Smc homodimer, in which ScpA and ScpB bind to the head domain of Smc. The presence of the three proteins is required for the association of the complex with DNA.

Its subcellular location is the cytoplasm. Participates in chromosomal partition during cell division. May act via the formation of a condensin-like complex containing Smc and ScpA that pull DNA away from mid-cell into both cell halves. In Listeria welshimeri serovar 6b (strain ATCC 35897 / DSM 20650 / CCUG 15529 / CIP 8149 / NCTC 11857 / SLCC 5334 / V8), this protein is Segregation and condensation protein B.